Here is a 577-residue protein sequence, read N- to C-terminus: Aspartate--tRNA(Asp/Asn) ligase (577 aa).

E171 is a binding site for L-aspartate. The segment at Q195 to K198 is aspartate. R217 lines the L-aspartate pocket. ATP is bound by residues R217 to E219 and Q226. Residue H444 coordinates L-aspartate. Residue E474 coordinates ATP. Position 481 (R481) interacts with L-aspartate. G526 to R529 contributes to the ATP binding site.

This sequence belongs to the class-II aminoacyl-tRNA synthetase family. Type 1 subfamily. In terms of assembly, homodimer.

It is found in the cytoplasm. The enzyme catalyses tRNA(Asx) + L-aspartate + ATP = L-aspartyl-tRNA(Asx) + AMP + diphosphate. Its function is as follows. Aspartyl-tRNA synthetase with relaxed tRNA specificity since it is able to aspartylate not only its cognate tRNA(Asp) but also tRNA(Asn). Reaction proceeds in two steps: L-aspartate is first activated by ATP to form Asp-AMP and then transferred to the acceptor end of tRNA(Asp/Asn). This chain is Aspartate--tRNA(Asp/Asn) ligase, found in Helicobacter pylori (strain P12).